Reading from the N-terminus, the 201-residue chain is Small ribosomal subunit protein uS4c (201 aa).

The S4 RNA-binding domain maps to 89-149 (MRLDNILFRL…DKPKSGALIK (61 aa)).

It belongs to the universal ribosomal protein uS4 family. As to quaternary structure, part of the 30S ribosomal subunit. Contacts protein S5. The interaction surface between S4 and S5 is involved in control of translational fidelity.

The protein localises to the plastid. In terms of biological role, one of the primary rRNA binding proteins, it binds directly to 16S rRNA where it nucleates assembly of the body of the 30S subunit. Its function is as follows. With S5 and S12 plays an important role in translational accuracy. The polypeptide is Small ribosomal subunit protein uS4c (rps4) (Cuscuta reflexa (Southern Asian dodder)).